The primary structure comprises 62 residues: Photosystem II reaction center protein Z (62 aa).

2 helical membrane passes run 8 to 28 (AVFA…VVLA) and 41 to 61 (FSGA…NSLI).

Belongs to the PsbZ family. As to quaternary structure, PSII is composed of 1 copy each of membrane proteins PsbA, PsbB, PsbC, PsbD, PsbE, PsbF, PsbH, PsbI, PsbJ, PsbK, PsbL, PsbM, PsbT, PsbY, PsbZ, Psb30/Ycf12, at least 3 peripheral proteins of the oxygen-evolving complex and a large number of cofactors. It forms dimeric complexes.

It is found in the plastid. It localises to the chloroplast thylakoid membrane. May control the interaction of photosystem II (PSII) cores with the light-harvesting antenna, regulates electron flow through the 2 photosystem reaction centers. PSII is a light-driven water plastoquinone oxidoreductase, using light energy to abstract electrons from H(2)O, generating a proton gradient subsequently used for ATP formation. The sequence is that of Photosystem II reaction center protein Z from Huperzia lucidula (Shining clubmoss).